The following is a 257-amino-acid chain: Hydroxyacylglutathione hydrolase (257 aa).

His-54, His-56, Asp-58, His-59, His-113, Asp-137, and His-175 together coordinate Zn(2+).

It belongs to the metallo-beta-lactamase superfamily. Glyoxalase II family. In terms of assembly, monomer. It depends on Zn(2+) as a cofactor.

The catalysed reaction is an S-(2-hydroxyacyl)glutathione + H2O = a 2-hydroxy carboxylate + glutathione + H(+). It participates in secondary metabolite metabolism; methylglyoxal degradation; (R)-lactate from methylglyoxal: step 2/2. Thiolesterase that catalyzes the hydrolysis of S-D-lactoyl-glutathione to form glutathione and D-lactic acid. The chain is Hydroxyacylglutathione hydrolase from Microcystis aeruginosa (strain NIES-843 / IAM M-2473).